The primary structure comprises 550 residues: Small ribosomal subunit protein uS3m (550 aa).

The segment at 112-133 (NDDTEEERNEVGGRGAGKRVES) is disordered.

This sequence belongs to the universal ribosomal protein uS3 family.

The protein localises to the mitochondrion. The sequence is that of Small ribosomal subunit protein uS3m (RPS3) from Oenothera berteroana (Bertero's evening primrose).